Reading from the N-terminus, the 500-residue chain is Perfringolysin O (500 aa).

Positions 1–28 (MIRFKKTKLIASIAMALCLFSQPVISFS) are cleaved as a signal peptide. The next 4 beta stranded transmembrane spans lie at 189–202 (KSQISSALNVNAKV), 209–218 (VDFNAVANNE), 287–296 (SKDVQAAFKA), and 304–316 (KNSQQYKDIYENS). The short motif at 458–468 (ECTGLAWEWWR) is the Conserved undecapeptide element. The Cholesterol binding signature appears at 490 to 491 (TL).

It belongs to the cholesterol-dependent cytolysin family. In terms of assembly, modeling based on cryo-EM shows a homooligomeric pore complex containing 38-44 subunits; when inserted in the host membrane.

The protein resides in the secreted. Its subcellular location is the host cell membrane. A cholesterol-dependent toxin that causes cytolysis by forming pores in cholesterol-containing host membranes. After binding to target membranes, the protein assembles into a pre-pore complex. A major conformational change leads to insertion in the host membrane and formation of an oligomeric pore complex. Cholesterol is required for binding to host cell membranes, membrane insertion and pore formation; cholesterol binding is mediated by a Thr-Leu pair in the C-terminus. Can be reversibly inactivated by oxidation. This is Perfringolysin O (pfo) from Clostridium perfringens (strain 13 / Type A).